The following is a 270-amino-acid chain: Tryptophan synthase alpha chain (270 aa).

Active-site proton acceptor residues include E49 and D60.

This sequence belongs to the TrpA family. As to quaternary structure, tetramer of two alpha and two beta chains.

The enzyme catalyses (1S,2R)-1-C-(indol-3-yl)glycerol 3-phosphate + L-serine = D-glyceraldehyde 3-phosphate + L-tryptophan + H2O. Its pathway is amino-acid biosynthesis; L-tryptophan biosynthesis; L-tryptophan from chorismate: step 5/5. Functionally, the alpha subunit is responsible for the aldol cleavage of indoleglycerol phosphate to indole and glyceraldehyde 3-phosphate. The protein is Tryptophan synthase alpha chain of Pseudomonas fluorescens (strain Pf0-1).